A 119-amino-acid chain; its full sequence is Large ribosomal subunit protein bL19 (119 aa).

It belongs to the bacterial ribosomal protein bL19 family.

Its function is as follows. This protein is located at the 30S-50S ribosomal subunit interface and may play a role in the structure and function of the aminoacyl-tRNA binding site. The protein is Large ribosomal subunit protein bL19 (rplS) of Mycoplasma pneumoniae (strain ATCC 29342 / M129 / Subtype 1) (Mycoplasmoides pneumoniae).